The sequence spans 606 residues: ATP-dependent rRNA helicase spb4 (606 aa).

Residues 1-29 (MSFQSINIDKWLKNAVAAQGFKKMTPVQA) carry the Q motif motif. A Helicase ATP-binding domain is found at 32-213 (IPLFLKNKDL…KIAGLRNSVR (182 aa)). 45–52 (AVTGSGKT) is an ATP binding site. The short motif at 161–164 (DEAD) is the DEAD box element. In terms of domain architecture, Helicase C-terminal spans 246-400 (CMIHLLCTIE…ALDLSRLKVL (155 aa)). The interval 521–574 (KQKEVKEKRNTRREKRKSKKEFLKAQKNEASNNLKQEIVSKAGAQETENDDLID) is disordered. Positions 521–601 (KQKEVKEKRN…KSKKRKNQAS (81 aa)) form a coiled coil. Residues 529-539 (RNTRREKRKSK) are compositionally biased toward basic residues.

The protein belongs to the DEAD box helicase family. DDX55/SPB4 subfamily. In terms of assembly, component of pre-60S ribosomal complexes.

It localises to the nucleus. The protein localises to the nucleolus. It carries out the reaction ATP + H2O = ADP + phosphate + H(+). Functionally, ATP-binding RNA helicase involved in the biogenesis of 60S ribosomal subunits. Binds 90S pre-ribosomal particles and dissociates from pre-60S ribosomal particles after processing of 27SB pre-rRNA. Required for the normal formation of 18S rRNA through the processing of pre-rRNAs at sites A0, A1 and A2, and the normal formation of 25S and 5.8S rRNAs through the processing of pre-rRNAs at sites C1 and C2. This is ATP-dependent rRNA helicase spb4 from Schizosaccharomyces pombe (strain 972 / ATCC 24843) (Fission yeast).